The chain runs to 310 residues: Ribosomal RNA small subunit methyltransferase H (310 aa).

S-adenosyl-L-methionine contacts are provided by residues Gly-32–His-34, Asp-52, Ala-83, Asp-100, and Gln-107.

It belongs to the methyltransferase superfamily. RsmH family.

It is found in the cytoplasm. It carries out the reaction cytidine(1402) in 16S rRNA + S-adenosyl-L-methionine = N(4)-methylcytidine(1402) in 16S rRNA + S-adenosyl-L-homocysteine + H(+). Its function is as follows. Specifically methylates the N4 position of cytidine in position 1402 (C1402) of 16S rRNA. This is Ribosomal RNA small subunit methyltransferase H from Geobacillus sp. (strain WCH70).